Reading from the N-terminus, the 418-residue chain is uncharacterized protein (418 aa).

This is an uncharacterized protein from Ictalurid herpesvirus 1 (strain Auburn) (IcHV-1).